Here is a 117-residue protein sequence, read N- to C-terminus: Immunoglobulin heavy variable 3-21 (117 aa).

The signal sequence occupies residues 1–19; sequence MELGLRWVFLVAILEGVQC. The segment at 20-44 is framework-1; it reads EVQLVESGGGLVKPGGSLRLSCAAS. The Ig-like domain occupies 20-117; sequence EVQLVESGGG…EDTAVYYCAR (98 aa). Residues Cys-41 and Cys-115 are joined by a disulfide bond. Positions 45–52 are complementarity-determining-1; it reads GFTFSSYS. The interval 53–69 is framework-2; sequence MNWVRQAPGKGLEWVSS. The segment at 70-77 is complementarity-determining-2; the sequence is ISSSSSYI. A framework-3 region spans residues 78-115; it reads YYADSVKGRFTISRDNAKNSLYLQMNSLRAEDTAVYYC. Residues 116 to 117 are complementarity-determining-3; it reads AR.

Immunoglobulins are composed of two identical heavy chains and two identical light chains; disulfide-linked.

The protein localises to the secreted. It localises to the cell membrane. Its function is as follows. V region of the variable domain of immunoglobulin heavy chains that participates in the antigen recognition. Immunoglobulins, also known as antibodies, are membrane-bound or secreted glycoproteins produced by B lymphocytes. In the recognition phase of humoral immunity, the membrane-bound immunoglobulins serve as receptors which, upon binding of a specific antigen, trigger the clonal expansion and differentiation of B lymphocytes into immunoglobulins-secreting plasma cells. Secreted immunoglobulins mediate the effector phase of humoral immunity, which results in the elimination of bound antigens. The antigen binding site is formed by the variable domain of one heavy chain, together with that of its associated light chain. Thus, each immunoglobulin has two antigen binding sites with remarkable affinity for a particular antigen. The variable domains are assembled by a process called V-(D)-J rearrangement and can then be subjected to somatic hypermutations which, after exposure to antigen and selection, allow affinity maturation for a particular antigen. In Homo sapiens (Human), this protein is Immunoglobulin heavy variable 3-21.